The following is a 212-amino-acid chain: Guanylate kinase (212 aa).

Positions 14-192 constitute a Guanylate kinase-like domain; it reads GTALVICAPS…AYDELRATYL (179 aa). Residue 21–28 coordinates ATP; it reads APSGTGKT.

The protein belongs to the guanylate kinase family.

It is found in the cytoplasm. The enzyme catalyses GMP + ATP = GDP + ADP. In terms of biological role, essential for recycling GMP and indirectly, cGMP. The chain is Guanylate kinase from Lawsonia intracellularis (strain PHE/MN1-00).